We begin with the raw amino-acid sequence, 182 residues long: Probable RNA 2'-phosphotransferase (182 aa).

The protein belongs to the KptA/TPT1 family.

Its function is as follows. Removes the 2'-phosphate from RNA via an intermediate in which the phosphate is ADP-ribosylated by NAD followed by a presumed transesterification to release the RNA and generate ADP-ribose 1''-2''-cyclic phosphate (APPR&gt;P). May function as an ADP-ribosylase. This chain is Probable RNA 2'-phosphotransferase, found in Flavobacterium johnsoniae (strain ATCC 17061 / DSM 2064 / JCM 8514 / BCRC 14874 / CCUG 350202 / NBRC 14942 / NCIMB 11054 / UW101) (Cytophaga johnsonae).